Consider the following 491-residue polypeptide: Probable glycine dehydrogenase (decarboxylating) subunit 2 (491 aa).

At Lys-264 the chain carries N6-(pyridoxal phosphate)lysine.

The protein belongs to the GcvP family. C-terminal subunit subfamily. In terms of assembly, the glycine cleavage system is composed of four proteins: P, T, L and H. In this organism, the P 'protein' is a heterodimer of two subunits. It depends on pyridoxal 5'-phosphate as a cofactor.

It catalyses the reaction N(6)-[(R)-lipoyl]-L-lysyl-[glycine-cleavage complex H protein] + glycine + H(+) = N(6)-[(R)-S(8)-aminomethyldihydrolipoyl]-L-lysyl-[glycine-cleavage complex H protein] + CO2. Functionally, the glycine cleavage system catalyzes the degradation of glycine. The P protein binds the alpha-amino group of glycine through its pyridoxal phosphate cofactor; CO(2) is released and the remaining methylamine moiety is then transferred to the lipoamide cofactor of the H protein. This is Probable glycine dehydrogenase (decarboxylating) subunit 2 from Coxiella burnetii (strain Dugway 5J108-111).